Here is a 301-residue protein sequence, read N- to C-terminus: 2-aminobenzoylacetyl-CoA thioesterase (301 aa).

7 residues coordinate Fe cation: H69, H71, D73, H74, H159, D178, and H221.

The protein belongs to the metallo-beta-lactamase superfamily.

It carries out the reaction (2-aminobenzoyl)acetyl-CoA + H2O = (2-aminobenzoyl)acetate + CoA + H(+). Its activity is regulated as follows. Thioesterase activity, but not pyocyanine production, is inhibited by 2-(pyridin-3-yl)benzoic acid, 2-(1H-pyrrol-1-yl)benzoic acid and 3-methylthiophene-2-carboxylic acid. Compounds bind to the active center. Required for the biosynthesis of the quorum-sensing signaling molecules 2-heptyl-4(1H)-quinolone (HHQ) and 2-heptyl-3-hydroxy-4(1H)-quinolone (Pseudomonas quinolone signal or PQS), which are important for biofilm formation and virulence. Catalyzes the hydrolysis of the intermediate 2-aminobenzoylacetyl-CoA (2-ABA-CoA) to form 2-aminobenzoylacetate (2-ABA), the precursor of HHQ. In vitro, can also hydrolyze other substrates such as S-ethyl-acetothioacetate and acetoacetyl-CoA, but is inactive against anthraniloyl-CoA, malonyl-CoA and octanoyl-CoA. Beyond its thioesterase function, is involved in the regulation of diverse genes coding for key virulence determinants and biofilm development. The sequence is that of 2-aminobenzoylacetyl-CoA thioesterase from Pseudomonas aeruginosa (strain ATCC 15692 / DSM 22644 / CIP 104116 / JCM 14847 / LMG 12228 / 1C / PRS 101 / PAO1).